The primary structure comprises 61 residues: MARFRRSRSRSRSLYRRRRRSRRGGRQTRSRKLSRSRRRGRSRRRKGRRSRRSSRRSRRRN.

The disordered stretch occupies residues 1 to 61; sequence MARFRRSRSR…RSSRRSRRRN (61 aa).

This sequence belongs to the protamine P1 family. As to expression, testis.

Its subcellular location is the nucleus. The protein localises to the chromosome. Protamines substitute for histones in the chromatin of sperm during the haploid phase of spermatogenesis. They compact sperm DNA into a highly condensed, stable and inactive complex. In Ornithorhynchus anatinus (Duckbill platypus), this protein is Sperm protamine P1 (PRM1).